Consider the following 185-residue polypeptide: Ribosome-recycling factor (185 aa).

This sequence belongs to the RRF family.

The protein localises to the cytoplasm. Its function is as follows. Responsible for the release of ribosomes from messenger RNA at the termination of protein biosynthesis. May increase the efficiency of translation by recycling ribosomes from one round of translation to another. The sequence is that of Ribosome-recycling factor from Campylobacter concisus (strain 13826).